The following is a 111-amino-acid chain: UPF0145 protein BMA10229_A0446 (111 aa).

This sequence belongs to the UPF0145 family.

In Burkholderia mallei (strain NCTC 10229), this protein is UPF0145 protein BMA10229_A0446.